The chain runs to 87 residues: uncharacterized protein (87 aa).

A helical transmembrane segment spans residues 29-49 (ILWMIIFVVIIAVIIYILISP).

It localises to the membrane. This is an uncharacterized protein from Methanocaldococcus jannaschii (strain ATCC 43067 / DSM 2661 / JAL-1 / JCM 10045 / NBRC 100440) (Methanococcus jannaschii).